The sequence spans 107 residues: Essential MCU regulator, mitochondrial (107 aa).

A mitochondrion-targeting transit peptide spans 1 to 47 (MASTAARRLAWVAVRPGALWSGPRGRRGGDVYTVPGSSGLSQVPSRS). At 48–65 (VIVTRSGAILPKPVKMSF) the chain is on the mitochondrial matrix side. A helical transmembrane segment spans residues 66-85 (GLLRVFSIVIPFLYVGTLIS). The short motif at 81–85 (GTLIS) is the GXXXX[G/A/S] element. Over 86–107 (KNFAALLEEHDIFVPEDDDDDD) the chain is Mitochondrial intermembrane.

It belongs to the SMDT1/EMRE family. In terms of assembly, component of the uniplex complex, composed of MCU, EMRE/SMDT1, MICU1 and MICU2 (or MICU3) in a 4:4:1:1 stoichiometry. The number of EMRE/SMDT1 molecules is hovewer variable, ranging from 1 to 4 copies per uniplex complex, leading to uniplex complexes with distinct gatekeeping profiles. Interacts (via its C-terminal poly-Asp tail) with MCUR1; the interaction is direct. Unprocessed form interacts (via transit peptide) with MAIP1. In terms of processing, undergoes proteolytic degradation in neurons: degraded by AFG3L2 and SPG7 before SMDT1/EMRE assembly with the uniporter complex, limiting the availability of SMDT1/EMRE for MCU assembly and promoting efficient assembly of gatekeeper subunits with MCU. Widely expressed.

The protein localises to the mitochondrion inner membrane. Essential regulatory subunit of the mitochondrial calcium uniporter complex (uniplex), a complex that mediates calcium uptake into mitochondria. Required to bridge the calcium-sensing proteins MICU1 with the calcium-conducting subunit MCU. Acts by mediating activation of MCU and retention of MICU1 to the MCU pore, in order to ensure tight regulation of the uniplex complex and appropriate responses to intracellular calcium signaling. The protein is Essential MCU regulator, mitochondrial of Mus musculus (Mouse).